Consider the following 506-residue polypeptide: MLSKVLPVLLGILLILQSRVEGPQTESKNEASSRDVVYGPQPQPLENQLLSEETKSTETETGSRVGKLPEASRILNTILSNYDHKLRPGIGEKPTVVTVEISVNSLGPLSILDMEYTIDIIFSQTWYDERLCYNDTFESLVLNGNVVSQLWIPDTFFRNSKRTHEHEITMPNQMVRIYKDGKVLYTIRMTIDAGCSLHMLRFPMDSHSCPLSFSSFSYPENEMIYKWENFKLEINEKNSWKLFQFDFTGVSNKTEIITTPVGDFMVMTIFFNVSRRFGYVAFQNYVPSSVTTMLSWVSFWIKTESAPARTSLGITSVLTMTTLGTFSRKNFPRVSYITALDFYIAICFVFCFCALLEFAVLNFLIYNQTKAHASPKLRHPRINSRAHARTRARSRACARQHQEAFVCQIVTTEGSDGEERPSCSAQQPPSPGSPEGPRSLCSKLACCEWCKRFKKYFCMVPDCEGSTWQQGRLCIHVYRLDNYSRVVFPVTFFFFNVLYWLVCLNL.

The signal sequence occupies residues 1–22; that stretch reads MLSKVLPVLLGILLILQSRVEG. The disordered stretch occupies residues 23-66; that stretch reads PQTESKNEASSRDVVYGPQPQPLENQLLSEETKSTETETGSRVG. The Extracellular segment spans residues 23 to 280; it reads PQTESKNEAS…FNVSRRFGYV (258 aa). Residue N134 is glycosylated (N-linked (GlcNAc...) asparagine). C195 and C209 form a disulfide bridge. N252 carries N-linked (GlcNAc...) asparagine glycosylation. A helical membrane pass occupies residues 281-301; sequence AFQNYVPSSVTTMLSWVSFWI. Residues 302–307 lie on the Cytoplasmic side of the membrane; the sequence is KTESAP. Residues 308–327 traverse the membrane as a helical segment; that stretch reads ARTSLGITSVLTMTTLGTFS. Residues 328–343 are Extracellular-facing; the sequence is RKNFPRVSYITALDFY. The helical transmembrane segment at 344–364 threads the bilayer; the sequence is IAICFVFCFCALLEFAVLNFL. The Cytoplasmic portion of the chain corresponds to 365–485; sequence IYNQTKAHAS…HVYRLDNYSR (121 aa). A disordered region spans residues 413–438; sequence EGSDGEERPSCSAQQPPSPGSPEGPR. The chain crosses the membrane as a helical span at residues 486–506; sequence VVFPVTFFFFNVLYWLVCLNL.

Belongs to the ligand-gated ion channel (TC 1.A.9) family. Gamma-aminobutyric acid receptor (TC 1.A.9.5) subfamily. GABRE sub-subfamily. In terms of assembly, heteropentamer, formed by a combination of alpha (GABRA1-6), beta (GABRB1-3), gamma (GABRG1-3), delta (GABRD), epsilon (GABRE), rho (GABRR1-3), pi (GABRP) and theta (GABRQ) chains, each subunit exhibiting distinct physiological and pharmacological properties. As to expression, expressed in many tissues. Highest levels of expression in adult heart and placenta.

Its subcellular location is the cell membrane. It is found in the postsynaptic cell membrane. It catalyses the reaction chloride(in) = chloride(out). Potentiated by pentobarbital, loreclezole, and lanthanum and inhibited by zinc and furosemide. Introduction of the epsilon subunit to the receptor complex resulted in diminished modulatory effects by etomidate, propofol, pregnanolone and flurazepam. In terms of biological role, epsilon subunit of the heteropentameric ligand-gated chloride channel gated by gamma-aminobutyric acid (GABA), a major inhibitory neurotransmitter in the brain. GABA-gated chloride channels, also named GABA(A) receptors (GABAAR), consist of five subunits arranged around a central pore and contain GABA active binding site(s) located at the alpha and beta subunit interfaces. When activated by GABA, GABAARs selectively allow the flow of chloride anions across the cell membrane down their electrochemical gradient. GABAARs containing epsilon subunits also permit spontaneous chloride channel activity while preserving the structural information required for GABA-gated openings. GABARs containing epsilon subunit may regulate cardiac function. This Homo sapiens (Human) protein is Gamma-aminobutyric acid receptor subunit epsilon.